The following is a 42-amino-acid chain: Photosystem I reaction center subunit IX (42 aa).

Residues 7-27 traverse the membrane as a helical segment; that stretch reads YLSVAPVLSTLWFGALAGLLI.

It belongs to the PsaJ family.

It localises to the plastid. The protein localises to the chloroplast thylakoid membrane. Functionally, may help in the organization of the PsaE and PsaF subunits. This chain is Photosystem I reaction center subunit IX, found in Guizotia abyssinica (Niger).